The following is a 108-amino-acid chain: UPF0166 protein MJ1524 (108 aa).

The protein belongs to the UPF0166 family.

The sequence is that of UPF0166 protein MJ1524 from Methanocaldococcus jannaschii (strain ATCC 43067 / DSM 2661 / JAL-1 / JCM 10045 / NBRC 100440) (Methanococcus jannaschii).